A 57-amino-acid chain; its full sequence is Large ribosomal subunit protein bL32c (57 aa).

It belongs to the bacterial ribosomal protein bL32 family.

The protein localises to the plastid. It is found in the chloroplast. This Drimys granadensis protein is Large ribosomal subunit protein bL32c.